The following is a 377-amino-acid chain: Oleosin-B4 (377 aa).

The segment at 1–37 (MRNEIQNETAQTDQTQGSMFSFFNLFPFLLPMFEVIK) is polar. Transmembrane regions (helical) follow at residues 16–36 (QGSMFSFFNLFPFLLPMFEVI), 38–58 (MVVASVASVVYLGFAGVTLSG), and 69–89 (LFIIFSPILLPAIAATTVLAA). The tract at residues 38 to 133 (MVVASVASVV…IIPESIKPSN (96 aa)) is hydrophobic. A run of 3 repeats spans residues 115–124 (IPESIKPSNI), 125–134 (IPESIKPSNI), and 135–144 (IPEGIKPSNI). Residues 115 to 144 (IPESIKPSNIIPESIKPSNIIPEGIKPSNI) are 3 X 10 AA tandem repeats of I-P-E-[SG]-I-K-P-S-N-[IV]. The interval 158–377 (KIKAKKEEKS…SSHGSGGKHI (220 aa)) is disordered. Basic and acidic residues-rich tracts occupy residues 162–185 (KKEEKSKGKSEDSSKGKGKSKGED) and 195–231 (DEDKHGSGAKHGKGESKHGKGESTHGKGGKHGSEGKH). Residues 196 to 202 (EDKHGSG) form a 2-1 repeat. One copy of the 2.1 repeat lies at 196-202 (EDKHGSG). A 3 X 6 AA tandem repeats of E-[SD]-[KT]-H-G-[KS]-G region spans residues 196–222 (EDKHGSGAKHGKGESKHGKGESTHGKG). The stretch at 204 to 208 (KHGKG) is one 2-2; truncated repeat. A run of 7 repeats spans residues 209 to 215 (ESKHGKG), 216 to 222 (ESTHGKG), 230 to 247 (KHGSGGSSMGGGKHGSGG), 260 to 277 (KHESGGSPMGGGKHGSEG), 278 to 295 (KHGSGGASMGGGKHGSGG), 296 to 313 (KHESGGSAMGGGKHGSGG), and 355 to 359 (SSDGS). Residues 230–313 (KHGSGGSSMG…MGGGKHGSGG (84 aa)) are 4 X 18 AA tandem repeats of K-H-E-S-G-G-[SA]-[PSA]-M-G-G-G-K-H-G-S-[GE]-G. Gly residues predominate over residues 232–244 (GSGGSSMGGGKHG). Positions 247–263 (GKHETGGKHGSGGKHES) are enriched in basic and acidic residues. Gly residues-rich tracts occupy residues 280–292 (GSGGASMGGGKHG) and 302–314 (SAMGGGKHGSGGK). Low complexity predominate over residues 350 to 369 (SSTSESSDGSSDGSSSDGSS). The interval 355 to 368 (SSDGSSDGSSSDGS) is 3 X 5 AA tandem repeats of S-S-D-G-S. The stretch at 360–363 (SDGS) is one 4-2; truncated repeat. One copy of the 4-3 repeat lies at 364 to 368 (SSDGS).

This sequence belongs to the oleosin family. The full-length protein is found in the tapetal lipid bodies of immature anthers, the proteolytically cleaved C-terminal product is found on the coats of pollen grains. No expression is detected in other flower organs, siliques or seedlings.

The protein resides in the lipid droplet. Its subcellular location is the membrane. In terms of biological role, many of the major pollen coat proteins are derived from endoproteolytic cleavage of oleosin-like proteins. The protein is Oleosin-B4 of Brassica napus (Rape).